We begin with the raw amino-acid sequence, 105 residues long: Cytochrome c-553-like (105 aa).

The N-terminal stretch at 1-29 (MAGIVSLVILAVALFSFMNFDPYVSQVLA) is a signal peptide. Heme c contacts are provided by Cys-45, Cys-48, His-49, and Met-85.

Binds 1 heme c group covalently per subunit.

In Synechocystis sp. (strain ATCC 27184 / PCC 6803 / Kazusa), this protein is Cytochrome c-553-like (cytM).